The following is a 390-amino-acid chain: tRNA(Met) cytidine acetate ligase (390 aa).

ATP-binding positions include Ile7–His20, Gly101, Asn152, and Arg177.

This sequence belongs to the TmcAL family.

It is found in the cytoplasm. The enzyme catalyses cytidine(34) in elongator tRNA(Met) + acetate + ATP = N(4)-acetylcytidine(34) in elongator tRNA(Met) + AMP + diphosphate. In terms of biological role, catalyzes the formation of N(4)-acetylcytidine (ac(4)C) at the wobble position of elongator tRNA(Met), using acetate and ATP as substrates. First activates an acetate ion to form acetyladenylate (Ac-AMP) and then transfers the acetyl group to tRNA to form ac(4)C34. The protein is tRNA(Met) cytidine acetate ligase of Leuconostoc mesenteroides subsp. mesenteroides (strain ATCC 8293 / DSM 20343 / BCRC 11652 / CCM 1803 / JCM 6124 / NCDO 523 / NBRC 100496 / NCIMB 8023 / NCTC 12954 / NRRL B-1118 / 37Y).